The primary structure comprises 163 residues: Anthranilate 1,2-dioxygenase small subunit (163 aa).

It belongs to the bacterial ring-hydroxylating dioxygenase beta subunit family. In terms of assembly, the anthranilate dioxygenase (AntDO) multicomponent enzyme system is composed of an oxygenase component and a NADH:acceptor reductase component (AntC). The oxygenase component is a heterohexamer of 3 large (AntA) and 3 small (AntB) subunits.

The enzyme catalyses anthranilate + NADH + O2 + 3 H(+) = catechol + NH4(+) + CO2 + NAD(+). The catalysed reaction is anthranilate + NADPH + O2 + 3 H(+) = catechol + NH4(+) + CO2 + NADP(+). The protein operates within aromatic compound metabolism; anthranilate degradation via hydroxylation; catechol from anthranilate: step 1/1. Its function is as follows. Component of anthranilate dioxygenase multicomponent enzyme system which catalyzes the incorporation of both atoms of molecular oxygen into anthranilate to form catechol. The protein is Anthranilate 1,2-dioxygenase small subunit of Acinetobacter baylyi (strain ATCC 33305 / BD413 / ADP1).